A 206-amino-acid polypeptide reads, in one-letter code: Apoptosis regulator OPG045 (206 aa).

This sequence belongs to the orthopoxvirus OPG045 family. Homodimer. Interacts with host pro-apoptotic protein BCL2L11 (via BH3 domain). Interacts with host NLRP1. Interacts with host BAK.

The protein localises to the host mitochondrion outer membrane. It localises to the host cytoplasm. Plays a role in evading host innate immune response by inhibiting host inflammasome activation. Interacts with and inhibits NLR-mediated interleukin-1 beta/IL1B production in infected cells. At the host mitochondria outer membrane, interacts with the BH3 domain of host BAK and prevents BAK from binding active BAX. In turn, host apoptosis is inhibited. The chain is Apoptosis regulator OPG045 (OPG045) from Vaccinia virus (strain L-IVP) (VACV).